The following is a 278-amino-acid chain: 4-hydroxy-3-methylbut-2-enyl diphosphate reductase (278 aa).

A [4Fe-4S] cluster-binding site is contributed by Cys12. Positions 41 and 74 each coordinate (2E)-4-hydroxy-3-methylbut-2-enyl diphosphate. Residues His41 and His74 each coordinate dimethylallyl diphosphate. Isopentenyl diphosphate-binding residues include His41 and His74. Cys96 is a binding site for [4Fe-4S] cluster. His124 provides a ligand contact to (2E)-4-hydroxy-3-methylbut-2-enyl diphosphate. His124 contacts dimethylallyl diphosphate. His124 provides a ligand contact to isopentenyl diphosphate. Glu126 serves as the catalytic Proton donor. Thr161 lines the (2E)-4-hydroxy-3-methylbut-2-enyl diphosphate pocket. Residue Cys189 participates in [4Fe-4S] cluster binding. Residues Ser217, Asn219, and Ser261 each contribute to the (2E)-4-hydroxy-3-methylbut-2-enyl diphosphate site. Dimethylallyl diphosphate is bound by residues Ser217, Asn219, and Ser261. The isopentenyl diphosphate site is built by Ser217, Asn219, and Ser261.

Belongs to the IspH family. It depends on [4Fe-4S] cluster as a cofactor.

The catalysed reaction is isopentenyl diphosphate + 2 oxidized [2Fe-2S]-[ferredoxin] + H2O = (2E)-4-hydroxy-3-methylbut-2-enyl diphosphate + 2 reduced [2Fe-2S]-[ferredoxin] + 2 H(+). It catalyses the reaction dimethylallyl diphosphate + 2 oxidized [2Fe-2S]-[ferredoxin] + H2O = (2E)-4-hydroxy-3-methylbut-2-enyl diphosphate + 2 reduced [2Fe-2S]-[ferredoxin] + 2 H(+). It functions in the pathway isoprenoid biosynthesis; dimethylallyl diphosphate biosynthesis; dimethylallyl diphosphate from (2E)-4-hydroxy-3-methylbutenyl diphosphate: step 1/1. The protein operates within isoprenoid biosynthesis; isopentenyl diphosphate biosynthesis via DXP pathway; isopentenyl diphosphate from 1-deoxy-D-xylulose 5-phosphate: step 6/6. In terms of biological role, catalyzes the conversion of 1-hydroxy-2-methyl-2-(E)-butenyl 4-diphosphate (HMBPP) into a mixture of isopentenyl diphosphate (IPP) and dimethylallyl diphosphate (DMAPP). Acts in the terminal step of the DOXP/MEP pathway for isoprenoid precursor biosynthesis. The polypeptide is 4-hydroxy-3-methylbut-2-enyl diphosphate reductase (Anaeromyxobacter sp. (strain K)).